Consider the following 135-residue polypeptide: CDGSH iron-sulfur domain-containing protein 2A (135 aa).

At 1-37 (MVLETISRIIKIQLPAYLKKLPLPETIGGFARLTVSE) the chain is on the lumenal side. The helical transmembrane segment at 38 to 60 (WLRLLPLLGILALLGYLTIRPFL) threads the bilayer. Residues 61-135 (PKKKKQKDSL…GPLILKKKIL (75 aa)) are Cytoplasmic-facing. [2Fe-2S] cluster is bound by residues Cys99, Cys101, Cys110, and His114.

This sequence belongs to the CISD protein family. CISD2 subfamily. In terms of assembly, homodimer. Requires [2Fe-2S] cluster as cofactor.

The protein resides in the endoplasmic reticulum membrane. It is found in the mitochondrion outer membrane. Functionally, regulator of autophagy that contributes to antagonize becn1-mediated cellular autophagy at the endoplasmic reticulum. Participates in the interaction of bcl2 with becn1 and is required for bcl2-mediated depression of endoplasmic reticulum Ca(2+) stores during autophagy. This Salmo salar (Atlantic salmon) protein is CDGSH iron-sulfur domain-containing protein 2A (cisd2a).